Consider the following 524-residue polypeptide: MSAEVEYLQHEDYLYRTIKLKEIRELGINPYPYQYADCVEVQEIRNRVVDNELGDSEAAFRKETPKVRFAGRLVLFRSMGKNAFGQILDRDAKIQVMFNRDFSQVAGLPADSEISSIKFIEKKLDLGDILGIDGYLFFTHSGELTVLVETVTLLCKSLISLPDKHSGLADKEIRYRKRWADLISSEEVRKTFLARSRILKLIREYMDQQDFLEVETPVLQTIYGGAEATPFVTTLKALHTEMFLRISLEIALKKILVGGMSRVYEIGKVFRNEGIDRTHNPEFTMIEAYAAYWDYNDVMKCVENLVEYVVRALNNGETKVQYSHLKSGPQIVDFKAPWIRMTMKESISVYGGVDVDQYSEHELRDILKTRTALPEKAYVSATRGEMIALLFDELVCDKLIAPHHITDHPLETTPLCKTLRSGDETLVERFESFCLGKELCNAYSELNDPLQQRKLLEEQMRKKALNPDSEYHPIDEEFLEALCQGMPPAGGFGIGIDRLVMMLTDAASIRDVLYFPVMRRIESK.

Positions 431 and 438 each coordinate Mg(2+).

The protein belongs to the class-II aminoacyl-tRNA synthetase family. As to quaternary structure, homodimer. Mg(2+) is required as a cofactor.

Its subcellular location is the cytoplasm. The catalysed reaction is tRNA(Lys) + L-lysine + ATP = L-lysyl-tRNA(Lys) + AMP + diphosphate. The polypeptide is Lysine--tRNA ligase (lysS) (Chlamydia muridarum (strain MoPn / Nigg)).